The sequence spans 495 residues: Carotenoid 3,4-desaturase (495 aa).

The protein belongs to the carotenoid/retinoid oxidoreductase family.

It carries out the reaction dihydroisopentenyldehydrorhodopin + A = isopentenyldehydrorhodopin + AH2. It catalyses the reaction dihydrobisanhydrobacterioruberin + A = bisanhydrobacterioruberin + AH2. The protein operates within carotenoid biosynthesis. Involved in the biosynthesis of the acyclic C50 carotenoid bacterioruberin (BR). CrtD is involved in the desaturation reactions that form double bonds at C-3,4 of dihydroisopentenyldehydrorhodopin (DH-IDR) and C-3',4' of dihydrobisanhydrobacterioruberin (DH-BABR) to yield isopentenyld ehydrorhodopin (IDR) and bisanhydrobacterioruberin (BABR), respectively. The chain is Carotenoid 3,4-desaturase from Haloarcula japonica (strain ATCC 49778 / DSM 6131 / JCM 7785 / NBRC 101032 / NCIMB 13157 / TR-1).